A 298-amino-acid polypeptide reads, in one-letter code: Leucine-rich repeat-containing protein 55 (298 aa).

The signal sequence occupies residues 1–34; sequence MGDTWAQLPWPGPPHSALLLVFFLLAAGVMHSDA. Residues 35-65 enclose the LRRNT domain; it reads GASCPVLCTCRNQVVDCSNQRLFSVPPDLPM. 2 disulfides stabilise this stretch: cysteine 38–cysteine 44 and cysteine 42–cysteine 51. LRR repeat units follow at residues 66-87, 90-111, 114-135, 138-160, and 163-186; these read DTRNLSLAHNRIAAVPPGYLTC, ELRVLDLRNNSLMELPPGLFLH, RLAHLDLSYNNLSHVPADMFRE, GLVHIDLSHNPWLRRVHPQAFQG, and HLRDLDLSYGGLAFLSLEALEGLP. The LRRCT domain occupies 196–251; that stretch reads NPWVCGCTMEPLLKWLRNRIQRCTADSQLAECRGPPEVEGAPLFSLTEESFKACHL. Cystine bridges form between cysteine 200/cysteine 227 and cysteine 202/cysteine 249. The helical transmembrane segment at 259–279 threads the bilayer; the sequence is LFIAFVGFVVSIASVATNFLL.

As to quaternary structure, interacts with KCNMA1.

It localises to the cell membrane. Its function is as follows. Auxiliary protein of the large-conductance, voltage and calcium-activated potassium channel (BK alpha). Modulates gating properties by producing a marked shift in the BK channel's voltage dependence of activation in the hyperpolarizing direction, and in the absence of calcium. The chain is Leucine-rich repeat-containing protein 55 (Lrrc55) from Rattus norvegicus (Rat).